Consider the following 198-residue polypeptide: HTH-type transcriptional regulator BetI (198 aa).

Positions 8 to 68 (PIRRQQLIDA…ATMRYLISHL (61 aa)) constitute an HTH tetR-type domain. Positions 31–50 (TIAQIARRAGVSNGIISHYF) form a DNA-binding region, H-T-H motif.

It participates in amine and polyamine biosynthesis; betaine biosynthesis via choline pathway [regulation]. Functionally, repressor involved in the biosynthesis of the osmoprotectant glycine betaine. It represses transcription of the choline transporter BetT and the genes of BetAB involved in the synthesis of glycine betaine. This is HTH-type transcriptional regulator BetI from Serratia proteamaculans (strain 568).